The sequence spans 364 residues: MKLSVLVVTLLAVSWTSAQPETFSIQTKEANMNPEPANIRVARSSSAQSNLQWNYWDGQGAVPDGAVSIWNGEEKRTDYVCSCGCSSGFYSTKTGANCHYAYGETEKTCSGFSILVNRDNFENLEWKGGSDGSVPKNAVEVCEKVYVGKNKYGLGKVHTKHEALFLPWHGEEHWYKDYEVLTVNDDVVKQELTQVNYKLDAAHPIKNPPETLRRSSASNSQCRPITKTVALEKAIQTEQSWDVTSTVTFGVESSITAGIPDIASATVSVSVETSLSVSLGSTTTKTTTHTVSVIVTVPPNHYCPVTMVATKYTADIPFTGKMTRTYRNGQKRTTSITGTYRAIQVGEIRADVQRCSEIAGAKPC.

Residues 1-18 form the signal peptide; it reads MKLSVLVVTLLAVSWTSA. A propeptide spanning residues 19 to 42 is cleaved from the precursor; sequence QPETFSIQTKEANMNPEPANIRVA.

It belongs to the natterin family. In terms of processing, contains 4 disulfide bonds. As to expression, expressed by the venom gland.

Its subcellular location is the secreted. Its activity is regulated as follows. Inhibited by tissue-kallikrein inhibitor TKI and trasylol. Plasma kallikrein inhibitor PKSI527 and classical inhibitors of serine-, metallo-, thiol- or aspartate-peptidases evokes a minor inhibition of the peptide digestion. Functionally, shows nociceptive, edema-inducing and kininogenase activity with release of kallidin from low molecular weight kininogen. The cleavage occurs at Met-Lys bonds. In Thalassophryne nattereri (Copper Joe toadfish), this protein is Natterin-3.